A 518-amino-acid chain; its full sequence is Probable cytochrome P450 317a1 (518 aa).

C461 contacts heme.

Belongs to the cytochrome P450 family. It depends on heme as a cofactor.

It localises to the endoplasmic reticulum membrane. It is found in the microsome membrane. Functionally, may be involved in the metabolism of insect hormones and in the breakdown of synthetic insecticides. This chain is Probable cytochrome P450 317a1 (Cyp317a1), found in Drosophila melanogaster (Fruit fly).